The primary structure comprises 198 residues: MAADISESSGADCNGDPRNSAKLDADYPLRVLYCGVCSLPTEYCEYMPDVAKCRQWLEKNFPNEFAKLTVENSPKQEAGISEGQGTAGEEEEKKKQKRGGRGQIKQKKKTVPQKVTIAKIPRAKKKYVTRVCGLATFEIDLKEAQRFFAQKFSCGASVTGEDEIIIQGDFTDDIIDVIQEKWPEVVDDSIEDLGEVKK.

Residues 1-11 (MAADISESSGA) are compositionally biased toward polar residues. Disordered regions lie at residues 1–20 (MAAD…PRNS) and 72–110 (NSPK…KKKT). N-acetylalanine is present on alanine 2. 2 positions are modified to phosphoserine: serine 20 and serine 73. At threonine 86 the chain carries Phosphothreonine. The span at 95–110 (KQKRGGRGQIKQKKKT) shows a compositional bias: basic residues. The 68-residue stretch at 115–182 (VTIAKIPRAK…DIIDVIQEKW (68 aa)) folds into the SUI1 domain. At serine 189 the chain carries Phosphoserine.

Belongs to the DENR family. As to quaternary structure, interacts with MCTS1 (via PUA domain); the complex regulates translation reinitiation.

The protein localises to the cytoplasm. Functionally, translation regulator forming a complex with MCTS1 to promote translation reinitiation. Translation reinitiation is the process where the small ribosomal subunit remains attached to the mRNA following termination of translation of a regulatory upstream ORF (uORF), and resume scanning on the same mRNA molecule to initiate translation of a downstream ORF, usually the main ORF (mORF). The MCTS1/DENR complex is pivotal to two linked mechanisms essential for translation reinitiation. Firstly, the dissociation of deacylated tRNAs from post-termination 40S ribosomal complexes during ribosome recycling. Secondly, the recruitment in an EIF2-independent manner of aminoacylated initiator tRNA to P site of 40S ribosomes for a new round of translation. This regulatory mechanism governs the translation of more than 150 genes which translation reinitiation is MCTS1/DENR complex-dependent. The protein is Density-regulated protein (DENR) of Pongo abelii (Sumatran orangutan).